The sequence spans 89 residues: uncharacterized protein (89 aa).

The helical transmembrane segment at 20–39 (SFAMTTYLNLFVKLLIFLYI) threads the bilayer.

It is found in the membrane. This is an uncharacterized protein from Escherichia coli (strain K12).